A 126-amino-acid polypeptide reads, in one-letter code: Cysteine-rich tail protein 1 (126 aa).

Residues 1–89 (MDPHETLVKN…PAGLAYAGPP (89 aa)) form a disordered region.

Belongs to the CYSRT1 family. In terms of assembly, interacts with components of the late cornfied envelope (LCE).

The protein localises to the cornified envelope. In terms of biological role, component of the stratum corneum that may contribute to epidermal antimicrobial host defenses. The protein is Cysteine-rich tail protein 1 (CYSRT1) of Bos taurus (Bovine).